The primary structure comprises 125 residues: MIYGIGTDIVAVARLRGMWERHGDRVLDKLLTPQEIADFSKAADKGRFLAKRFAAKEAFSKALGTGVRPPATLPAIAVTHDDLGKPILECYGQLAEVLKNKNLRAHLSISDEAEYAVAYVILEHA.

Positions 8 and 57 each coordinate Mg(2+).

It belongs to the P-Pant transferase superfamily. AcpS family. The cofactor is Mg(2+).

It localises to the cytoplasm. It carries out the reaction apo-[ACP] + CoA = holo-[ACP] + adenosine 3',5'-bisphosphate + H(+). Transfers the 4'-phosphopantetheine moiety from coenzyme A to a Ser of acyl-carrier-protein. The chain is Holo-[acyl-carrier-protein] synthase from Dechloromonas aromatica (strain RCB).